Reading from the N-terminus, the 317-residue chain is Acetyl-coenzyme A carboxylase carboxyl transferase subunit alpha (317 aa).

A CoA carboxyltransferase C-terminal domain is found at 40–293 (LEVRVREAIV…GDVIANALGE (254 aa)).

The protein belongs to the AccA family. As to quaternary structure, acetyl-CoA carboxylase is a heterohexamer composed of biotin carboxyl carrier protein (AccB), biotin carboxylase (AccC) and two subunits each of ACCase subunit alpha (AccA) and ACCase subunit beta (AccD).

Its subcellular location is the cytoplasm. The catalysed reaction is N(6)-carboxybiotinyl-L-lysyl-[protein] + acetyl-CoA = N(6)-biotinyl-L-lysyl-[protein] + malonyl-CoA. Its pathway is lipid metabolism; malonyl-CoA biosynthesis; malonyl-CoA from acetyl-CoA: step 1/1. Its function is as follows. Component of the acetyl coenzyme A carboxylase (ACC) complex. First, biotin carboxylase catalyzes the carboxylation of biotin on its carrier protein (BCCP) and then the CO(2) group is transferred by the carboxyltransferase to acetyl-CoA to form malonyl-CoA. This is Acetyl-coenzyme A carboxylase carboxyl transferase subunit alpha from Rhizobium leguminosarum bv. trifolii (strain WSM2304).